A 129-amino-acid chain; its full sequence is Small ribosomal subunit protein uS11 (129 aa).

The protein belongs to the universal ribosomal protein uS11 family. Part of the 30S ribosomal subunit. Interacts with proteins S7 and S18. Binds to IF-3.

In terms of biological role, located on the platform of the 30S subunit, it bridges several disparate RNA helices of the 16S rRNA. Forms part of the Shine-Dalgarno cleft in the 70S ribosome. The chain is Small ribosomal subunit protein uS11 from Colwellia psychrerythraea (strain 34H / ATCC BAA-681) (Vibrio psychroerythus).